The primary structure comprises 313 residues: Small glutamine-rich tetratricopeptide repeat-containing protein alpha (313 aa).

The segment at 66–100 is disordered; the sequence is ATGKEMPQDLRSPARTPPSEEDSAEAERLKTEGNE. At Ser-77 the chain carries Phosphoserine. Thr-81 is modified (phosphothreonine). A Phosphoserine modification is found at Ser-84. A compositionally biased stretch (basic and acidic residues) spans 90–100; it reads EAERLKTEGNE. TPR repeat units lie at residues 91–124, 125–158, and 159–192; these read AERL…NPAN, AVYF…DPAY, and SKAY…DPDN. The residue at position 137 (Lys-137) is an N6-acetyllysine. The disordered stretch occupies residues 250-269; the sequence is MISGGNNPLGTPGTSPSQND. Position 301 is a phosphoserine (Ser-301). The residue at position 303 (Thr-303) is a Phosphothreonine. Ser-305 bears the Phosphoserine mark.

The protein belongs to the SGT family. In terms of assembly, homodimer. Homooligomer. Interacts with DNAJC5 and DNAJC5B. Interacts (via TPR repeats) with HSP90AA1. Interacts (via Gln-rich region) with SLC2A1. Interacts with HSP90AB1. Interacts (via TPR repeats) with HSPA8/Hsc70; the interaction is direct. Interacts with BAG6 (via ubiquitin-like domain); interaction prevents interaction between BAG6 and RNF126. Forms a multiprotein complex, at least composed of DNAJB12, DNAJB14, HSPA8/Hsc70 and SGTA; interaction with DNAJB14 and HSPA8/Hsc70 is direct. As to quaternary structure, (Microbial infection) Interacts with Vpu and Gag from HIV-1. (Microbial infection) Interacts with SARS-CoV accessory protein 7a. Ubiquitous.

It is found in the cytoplasm. It localises to the nucleus. Functionally, co-chaperone that binds misfolded and hydrophobic patches-containing client proteins in the cytosol. Mediates their targeting to the endoplasmic reticulum but also regulates their sorting to the proteasome when targeting fails. Functions in tail-anchored/type II transmembrane proteins membrane insertion constituting with ASNA1 and the BAG6 complex a targeting module. Functions upstream of the BAG6 complex and ASNA1, binding more rapidly the transmembrane domain of newly synthesized proteins. It is also involved in the regulation of the endoplasmic reticulum-associated misfolded protein catabolic process via its interaction with BAG6: collaborates with the BAG6 complex to maintain hydrophobic substrates in non-ubiquitinated states. Competes with RNF126 for interaction with BAG6, preventing the ubiquitination of client proteins associated with the BAG6 complex. Binds directly to HSC70 and HSP70 and regulates their ATPase activity. In terms of biological role, (Microbial infection) In case of infection by polyomavirus, involved in the virus endoplasmic reticulum membrane penetration and infection via interaction with DNAJB12, DNAJB14 and HSPA8/Hsc70. The chain is Small glutamine-rich tetratricopeptide repeat-containing protein alpha (SGTA) from Homo sapiens (Human).